The primary structure comprises 431 residues: Mannan endo-1,4-beta-mannosidase 5 (431 aa).

The first 24 residues, 1–24 (MVPTRNRPMLRILGFFICAAFIYL), serve as a signal peptide directing secretion. The N-linked (GlcNAc...) asparagine glycan is linked to Asn45. Trp97 is a binding site for substrate. Asn168 carries an N-linked (GlcNAc...) asparagine glycan. Substrate is bound at residue Asn213. Catalysis depends on Glu214, which acts as the Proton donor. Residue Asn282 is glycosylated (N-linked (GlcNAc...) asparagine). Position 294 (Tyr294) interacts with substrate. An N-linked (GlcNAc...) asparagine glycan is attached at Asn301. Glu334 (nucleophile) is an active-site residue. Substrate is bound at residue Trp376.

Belongs to the glycosyl hydrolase 5 (cellulase A) family. As to expression, expressed in stems.

Its subcellular location is the secreted. The enzyme catalyses Random hydrolysis of (1-&gt;4)-beta-D-mannosidic linkages in mannans, galactomannans and glucomannans.. This is Mannan endo-1,4-beta-mannosidase 5 (MAN5) from Arabidopsis thaliana (Mouse-ear cress).